A 245-amino-acid polypeptide reads, in one-letter code: 1-(5-phosphoribosyl)-5-[(5-phosphoribosylamino)methylideneamino] imidazole-4-carboxamide isomerase (245 aa).

Aspartate 7 acts as the Proton acceptor in catalysis. Aspartate 129 functions as the Proton donor in the catalytic mechanism.

It belongs to the HisA/HisF family.

It localises to the cytoplasm. The catalysed reaction is 1-(5-phospho-beta-D-ribosyl)-5-[(5-phospho-beta-D-ribosylamino)methylideneamino]imidazole-4-carboxamide = 5-[(5-phospho-1-deoxy-D-ribulos-1-ylimino)methylamino]-1-(5-phospho-beta-D-ribosyl)imidazole-4-carboxamide. The protein operates within amino-acid biosynthesis; L-histidine biosynthesis; L-histidine from 5-phospho-alpha-D-ribose 1-diphosphate: step 4/9. This Edwardsiella ictaluri (strain 93-146) protein is 1-(5-phosphoribosyl)-5-[(5-phosphoribosylamino)methylideneamino] imidazole-4-carboxamide isomerase.